Reading from the N-terminus, the 578-residue chain is Phosphoenolpyruvate-protein phosphotransferase (578 aa).

The Tele-phosphohistidine intermediate role is filled by H195. Residues R302 and R338 each contribute to the phosphoenolpyruvate site. 2 residues coordinate Mg(2+): E437 and D461. Residues 460 to 461 (ND) and R471 contribute to the phosphoenolpyruvate site. C508 serves as the catalytic Proton donor.

The protein belongs to the PEP-utilizing enzyme family. Homodimer. Mg(2+) is required as a cofactor.

It is found in the cytoplasm. It catalyses the reaction L-histidyl-[protein] + phosphoenolpyruvate = N(pros)-phospho-L-histidyl-[protein] + pyruvate. General (non sugar-specific) component of the phosphoenolpyruvate-dependent sugar phosphotransferase system (sugar PTS). This major carbohydrate active-transport system catalyzes the phosphorylation of incoming sugar substrates concomitantly with their translocation across the cell membrane. Enzyme I transfers the phosphoryl group from phosphoenolpyruvate (PEP) to the phosphoryl carrier protein (HPr). The protein is Phosphoenolpyruvate-protein phosphotransferase (ptsI) of Geobacillus stearothermophilus (Bacillus stearothermophilus).